A 405-amino-acid chain; its full sequence is Potassium channel subfamily K member 18 (405 aa).

The helical transmembrane segment at 43–63 (LPGLCFLCCLVTYALVGAALF) threads the bilayer. Residue N94 is glycosylated (N-linked (GlcNAc...) asparagine). Positions 125–151 (FLSALFFCCTVFSTVGYGHMYPVTRLG) form an intramembrane region, pore-forming. 4 residues coordinate K(+): T138, V139, G140, and Y141. The interval 138–143 (TVGYGH) is selectivity filter 1. A helical membrane pass occupies residues 153 to 173 (FLCMLYALFGIPLMFLVLTDI). The segment at 221 to 226 (PQIVID) is interaction with calcineurin. An interaction with YWHAH region spans residues 272 to 277 (RSNSCP). A phosphoserine mark is found at S275 and S287. Residues 304 to 324 (IPLPVIALVIFAYISCAAAIL) traverse the membrane as a helical segment. The segment at residues 337–351 (FYFCFVTLTTIGFGD) is an intramembrane region (pore-forming). The tract at residues 346 to 351 (TIGFGD) is selectivity filter 2. A helical transmembrane segment spans residues 358-378 (HFFLFFSIYIIVGMEILFIAF).

The protein belongs to the two pore domain potassium channel (TC 1.A.1.8) family. In terms of assembly, homodimer. Heterodimer with KCNK2. Heterodimer with KCNK10. Interacts with calcineurin. Interacts with YWHAH, in a phosphorylation-dependent manner. In terms of processing, phosphorylation of Ser-275 is required for the binding of 14-3-3eta/YWHAH. Calcineurin-mediated dephosphorylation of Ser-287 enhances channel activity. N-glycosylated.

The protein resides in the cell membrane. It carries out the reaction K(+)(in) = K(+)(out). Its activity is regulated as follows. Activated by volatile anesthetics, such as isoflurane and inhibited by local anesthetics such as bupivacaine and lidocaine. Inhibited by extracellular acidic pH. Inhibited by Zn(2+) ions. K(+) channel that conducts outward and inward rectifying currents at depolarized and hyperpolarized membrane potentials, respectively. The outward rectifying currents are voltage-dependent, coupled to K(+) electrochemical gradient across the membrane, whereas the inward currents can be induced in response to activation of Ca(2+)-mobilizing receptors. Homo- and heterodimerizes to form functional channels with distinct regulatory and gating properties. In trigeminal ganglia sensory neurons, the heterodimers of KCNK18/TRESK and KCNK2/TREK-1 or KCNK10/TREK-2 inhibit neuronal firing and neurogenic inflammation by stabilizing the resting membrane potential at K(+) equilibrium potential as well as by regulating the threshold of action potentials and the spike frequency. In thymocytes, conducts K(+) currents upon T cell receptor (TCR) signaling leading to sustained Ca(2+) influx and NF-kappa-B activation, FOXP3 transcription and positive selection of regulatory T cell (Treg) progenitor subsets. Appears to mediate the analgesics effects of hydroxy-alpha-sanshool, a metabolite naturally present in Schezuan pepper and other Xanthoxylum plants. The protein is Potassium channel subfamily K member 18 (Kcnk18) of Rattus norvegicus (Rat).